Consider the following 245-residue polypeptide: Ubiquinone/menaquinone biosynthesis C-methyltransferase UbiE (245 aa).

S-adenosyl-L-methionine-binding positions include Thr-71, Asp-92, and 118–119 (DA).

The protein belongs to the class I-like SAM-binding methyltransferase superfamily. MenG/UbiE family.

It carries out the reaction a 2-demethylmenaquinol + S-adenosyl-L-methionine = a menaquinol + S-adenosyl-L-homocysteine + H(+). The enzyme catalyses a 2-methoxy-6-(all-trans-polyprenyl)benzene-1,4-diol + S-adenosyl-L-methionine = a 5-methoxy-2-methyl-3-(all-trans-polyprenyl)benzene-1,4-diol + S-adenosyl-L-homocysteine + H(+). It functions in the pathway quinol/quinone metabolism; menaquinone biosynthesis; menaquinol from 1,4-dihydroxy-2-naphthoate: step 2/2. The protein operates within cofactor biosynthesis; ubiquinone biosynthesis. In terms of biological role, methyltransferase required for the conversion of demethylmenaquinol (DMKH2) to menaquinol (MKH2) and the conversion of 2-polyprenyl-6-methoxy-1,4-benzoquinol (DDMQH2) to 2-polyprenyl-3-methyl-6-methoxy-1,4-benzoquinol (DMQH2). This chain is Ubiquinone/menaquinone biosynthesis C-methyltransferase UbiE, found in Neisseria meningitidis serogroup B (strain ATCC BAA-335 / MC58).